The sequence spans 289 residues: 4-diphosphocytidyl-2-C-methyl-D-erythritol kinase (289 aa).

Lys-11 is an active-site residue. 95 to 105 (PMGGGIGGGSS) contacts ATP. Residue Asp-137 is part of the active site.

Belongs to the GHMP kinase family. IspE subfamily.

It catalyses the reaction 4-CDP-2-C-methyl-D-erythritol + ATP = 4-CDP-2-C-methyl-D-erythritol 2-phosphate + ADP + H(+). Its pathway is isoprenoid biosynthesis; isopentenyl diphosphate biosynthesis via DXP pathway; isopentenyl diphosphate from 1-deoxy-D-xylulose 5-phosphate: step 3/6. Catalyzes the phosphorylation of the position 2 hydroxy group of 4-diphosphocytidyl-2C-methyl-D-erythritol. In Aeromonas hydrophila subsp. hydrophila (strain ATCC 7966 / DSM 30187 / BCRC 13018 / CCUG 14551 / JCM 1027 / KCTC 2358 / NCIMB 9240 / NCTC 8049), this protein is 4-diphosphocytidyl-2-C-methyl-D-erythritol kinase.